The primary structure comprises 112 residues: UPF0060 membrane protein Arth_4238 (112 aa).

The next 4 helical transmembrane spans lie at 7–27 (ILLF…VWQA), 33–53 (EWWW…AATL), 62–82 (ILAA…MVFD), and 88–108 (RWDI…MFAP).

This sequence belongs to the UPF0060 family.

Its subcellular location is the cell membrane. This chain is UPF0060 membrane protein Arth_4238, found in Arthrobacter sp. (strain FB24).